A 254-amino-acid polypeptide reads, in one-letter code: Probable pectate lyase E (254 aa).

An N-terminal signal peptide occupies residues 1-17 (MLQSLLLLPLFLTSAFA). A glycan (N-linked (GlcNAc...) asparagine) is linked at Asn-175. The segment at 228 to 254 (NNNGKEPKKKSSGPSKACEYNQPLKKC) is disordered.

This sequence belongs to the polysaccharide lyase 3 family. Ca(2+) is required as a cofactor.

It is found in the secreted. The catalysed reaction is Eliminative cleavage of (1-&gt;4)-alpha-D-galacturonan to give oligosaccharides with 4-deoxy-alpha-D-galact-4-enuronosyl groups at their non-reducing ends.. In terms of biological role, pectinolytic enzyme consist of four classes of enzymes: pectin lyase, polygalacturonase, pectin methylesterase and rhamnogalacturonase. Among pectinolytic enzymes, pectin lyase is the most important in depolymerization of pectin, since it cleaves internal glycosidic bonds of highly methylated pectins. Favors pectate, the anion, over pectin, the methyl ester. This is Probable pectate lyase E (plyE) from Aspergillus clavatus (strain ATCC 1007 / CBS 513.65 / DSM 816 / NCTC 3887 / NRRL 1 / QM 1276 / 107).